Here is a 259-residue protein sequence, read N- to C-terminus: VLIRVLANLLLLQLSYAQESSELVIGGDECDINEHPFLVALHTARSKRFHCAGTLLNKEWVLTAARCDRKNIRIKFGVHNKNVQNEDEEMRVPKEKHFCVSSKTYTRWDKDIMLIRLKRPVNDGTHIAPLSLPSNPPSVGSVCRIMGWGSITTTKVTYPDVPHCANIKLFDYSVCRDAYKGLPEKSRTLCAGILEGGIDSCKVDNGGPLICNGQFQGIGSWEGHPCAQPLKPALYTNVFEYTDWIEGIIARNTTVTCPP.

Residues 1 to 17 (VLIRVLANLLLLQLSYA) form the signal peptide. The propeptide occupies 18–23 (QESSEL). One can recognise a Peptidase S1 domain in the interval 24 to 250 (VIGGDECDIN…YTDWIEGIIA (227 aa)). Cystine bridges form between Cys-30/Cys-164, Cys-51/Cys-67, Cys-99/Cys-257, Cys-143/Cys-211, Cys-175/Cys-190, and Cys-201/Cys-226. The N-linked (GlcNAc...) asparagine glycan is linked to Asn-252.

Belongs to the peptidase S1 family. Snake venom subfamily. As to expression, expressed by the venom gland.

It is found in the secreted. Functionally, snake venom serine protease homolog that may act in the hemostasis system of the prey. The sequence is that of Snake venom serine protease homolog rhinocerase 2 from Bitis rhinoceros (West African gaboon viper).